The primary structure comprises 171 residues: Protein-export protein SecB (171 aa).

This sequence belongs to the SecB family. Homotetramer, a dimer of dimers. One homotetramer interacts with 1 SecA dimer.

It is found in the cytoplasm. In terms of biological role, one of the proteins required for the normal export of preproteins out of the cell cytoplasm. It is a molecular chaperone that binds to a subset of precursor proteins, maintaining them in a translocation-competent state. It also specifically binds to its receptor SecA. The polypeptide is Protein-export protein SecB (Xanthomonas oryzae pv. oryzae (strain MAFF 311018)).